The chain runs to 283 residues: 2-dehydro-3-deoxyphosphooctonate aldolase (283 aa).

It belongs to the KdsA family.

The protein localises to the cytoplasm. The enzyme catalyses D-arabinose 5-phosphate + phosphoenolpyruvate + H2O = 3-deoxy-alpha-D-manno-2-octulosonate-8-phosphate + phosphate. It participates in carbohydrate biosynthesis; 3-deoxy-D-manno-octulosonate biosynthesis; 3-deoxy-D-manno-octulosonate from D-ribulose 5-phosphate: step 2/3. The protein operates within bacterial outer membrane biogenesis; lipopolysaccharide biosynthesis. In Vibrio parahaemolyticus serotype O3:K6 (strain RIMD 2210633), this protein is 2-dehydro-3-deoxyphosphooctonate aldolase.